The following is a 309-amino-acid chain: Probable ABC transporter permease protein YesP (309 aa).

6 helical membrane-spanning segments follow: residues 29 to 49 (FIIGFLCFTVIPMGASLFLSF), 84 to 104 (FTYVLAGVPLRLGFALFIAVI), 114 to 134 (IYRTLFYLPSIIGGSVAVAIM), 167 to 187 (ALWTLILLSVWQFGSSMLIFL), 217 to 237 (LPILTPIIFFNLVMQTISAFM), and 275 to 295 (YASAMAWVMLVIVGLITLILF). An ABC transmembrane type-1 domain is found at 80 to 294 (LKVTFTYVLA…VIVGLITLIL (215 aa)).

The protein belongs to the binding-protein-dependent transport system permease family. MalFG subfamily.

The protein localises to the cell membrane. Functionally, part of a binding-protein-dependent transport system. Probably responsible for the translocation of the substrate across the membrane. The protein is Probable ABC transporter permease protein YesP (yesP) of Bacillus subtilis (strain 168).